The chain runs to 243 residues: Ribonuclease HII (243 aa).

An RNase H type-2 domain is found at 23 to 217; it reads SVIVGVDEVG…LSSECEGAPP (195 aa). Residues Asp29, Glu30, and Asp122 each coordinate a divalent metal cation. Residues 223–243 form a disordered region; the sequence is LSSTGIKTPVDGRGDAVATRD. Residues 232–243 are compositionally biased toward basic and acidic residues; that stretch reads VDGRGDAVATRD.

Belongs to the RNase HII family. It depends on Mn(2+) as a cofactor. Mg(2+) serves as cofactor.

It is found in the cytoplasm. The catalysed reaction is Endonucleolytic cleavage to 5'-phosphomonoester.. Functionally, endonuclease that specifically degrades the RNA of RNA-DNA hybrids. The polypeptide is Ribonuclease HII (Anaplasma marginale (strain St. Maries)).